We begin with the raw amino-acid sequence, 479 residues long: Adenosylhomocysteinase (479 aa).

Substrate is bound by residues T56, D134, and E200. 201–203 is a binding site for NAD(+); sequence TTT. 2 residues coordinate substrate: K230 and D234. Residues N235, 264–269, E287, N322, 343–345, and N391 contribute to the NAD(+) site; these read GYGDVG and IGH.

The protein belongs to the adenosylhomocysteinase family. In terms of assembly, homotetramer. It depends on NAD(+) as a cofactor.

The catalysed reaction is S-adenosyl-L-homocysteine + H2O = L-homocysteine + adenosine. It participates in amino-acid biosynthesis; L-homocysteine biosynthesis; L-homocysteine from S-adenosyl-L-homocysteine: step 1/1. Adenosylhomocysteine is a competitive inhibitor of S-adenosyl-L-methionine-dependent methyl transferase reactions; therefore adenosylhomocysteinase may play a key role in the control of methylations via regulation of the intracellular concentration of adenosylhomocysteine. This is Adenosylhomocysteinase from Plasmodium falciparum (isolate 3D7).